The sequence spans 539 residues: Lysophospholipid acyltransferase LPEAT2 (539 aa).

A helical transmembrane segment spans residues 93–113; the sequence is LVICLPIALIRLVLFAASLAV. The HXXXXD motif signature appears at 178-183; the sequence is HVSYIE. EF-hand domains follow at residues 426-455, 457-492, and 493-528; these read KRIF…VLTQ, LFKQ…TIPN, and LNKD…NPLL. Residues Asp470, Asp472, Asp474, Tyr476, Glu481, Asp506, Asp508, Asp510, Arg512, and Asp517 each coordinate Ca(2+).

This sequence belongs to the 1-acyl-sn-glycerol-3-phosphate acyltransferase family.

The protein resides in the golgi apparatus membrane. The protein localises to the late endosome membrane. It catalyses the reaction a 1-acyl-sn-glycero-3-phosphoethanolamine + an acyl-CoA = a 1,2-diacyl-sn-glycero-3-phosphoethanolamine + CoA. The catalysed reaction is a 1-acyl-sn-glycero-3-phosphocholine + an acyl-CoA = a 1,2-diacyl-sn-glycero-3-phosphocholine + CoA. The enzyme catalyses a 1-acyl-sn-glycero-3-phospho-L-serine + an acyl-CoA = a 1,2-diacyl-sn-glycero-3-phospho-L-serine + CoA. It functions in the pathway lipid metabolism; phospholipid metabolism. In terms of biological role, possesses acyl-CoA-dependent lysophospholipid acyltransferase activity with a subset of lysophospholipids as substrates. Exhibits strong acylation activity on lysophosphatidylethanolamine (LPE), and lower activity on lysophosphatidylcholine (LPC) and lysophosphatidylserine (LPS). Exhibits acylation activity on both LPE and LPC. Has a preference for 18:1-LPE over 16:0-LPE as acceptor. Palmitoyl-CoA (16:0-CoA) is a better acyl donor than oleoyl-CoA (18:1-CoA). Among several different acyl-CoA species the best acyl donor is eicosanoyl-CoA (20:0-CoA). Activity is calcium-independent. Its activity is essential for maintaining adequate levels of phosphatidylethanolamine (PE), LPE and LPC in the cells, which is crucial for plant growth regulation. The chain is Lysophospholipid acyltransferase LPEAT2 from Arabidopsis thaliana (Mouse-ear cress).